A 507-amino-acid chain; its full sequence is Sensor protein CseC (507 aa).

Residues 1–42 form a disordered region; that stretch reads MRGFFRQRRSVSPPGHPYDRTGPGEHAGPGARTGPGGRPRVL. Residues 25–37 show a composition bias toward gly residues; the sequence is EHAGPGARTGPGG. 2 helical membrane-spanning segments follow: residues 60-80 and 183-203; these read LSAA…LVVH and ALVI…VLIG. The 57-residue stretch at 204-260 folds into the HAMP domain; sequence GQLSRRLREAAAAANRVASGEPDVRVRDAIGGVVRDETDDVARAVDAMADALQQRIE. The Histidine kinase domain maps to 268–470; sequence DIAHELRTPV…VAVLWLPEHA (203 aa). His271 is subject to Phosphohistidine; by autocatalysis. Positions 472 to 507 are disordered; the sequence is TNTGSYPMLPDRSKSGASSSARDMSREASQGMSRKP. Residues 486-507 show a composition bias toward polar residues; it reads SGASSSARDMSREASQGMSRKP.

The protein resides in the cell membrane. It carries out the reaction ATP + protein L-histidine = ADP + protein N-phospho-L-histidine.. Member of the two-component regulatory system CseB/CseC involved in the stability of the cell envelope, through activation of transcription of RNA polymerase sigma-E factor. CseC functions as a membrane-associated protein kinase that phosphorylates CseB in response to changes in the cell envelope. The sequence is that of Sensor protein CseC (cseC) from Streptomyces coelicolor (strain ATCC BAA-471 / A3(2) / M145).